We begin with the raw amino-acid sequence, 127 residues long: Large ribosomal subunit protein bL12 (127 aa).

It belongs to the bacterial ribosomal protein bL12 family. As to quaternary structure, homodimer. Part of the ribosomal stalk of the 50S ribosomal subunit. Forms a multimeric L10(L12)X complex, where L10 forms an elongated spine to which 2 to 4 L12 dimers bind in a sequential fashion. Binds GTP-bound translation factors.

In terms of biological role, forms part of the ribosomal stalk which helps the ribosome interact with GTP-bound translation factors. Is thus essential for accurate translation. This is Large ribosomal subunit protein bL12 from Phytoplasma mali (strain AT).